Reading from the N-terminus, the 350-residue chain is Outer membrane porin PhoE (350 aa).

The N-terminal stretch at 1-21 is a signal peptide; the sequence is MKKSTLALVVMGVVASASVHA.

The protein belongs to the Gram-negative porin family. As to quaternary structure, homotrimer.

It is found in the cell outer membrane. Uptake of inorganic phosphate, phosphorylated compounds, and some other negatively charged solutes. This chain is Outer membrane porin PhoE (phoE), found in Enterobacter cloacae.